A 448-amino-acid polypeptide reads, in one-letter code: Trk system potassium uptake protein TrkA homolog 1 (448 aa).

The RCK N-terminal 1 domain maps to 1–124 (MKAVIIGAGE…RAQVGVDLMI (124 aa)). NAD(+) is bound by residues 7-11 (GAGEV), D29, 70-71 (TG), and R101. Residues 144 to 225 (IDAEMFAEGK…MEDLESVFGS (82 aa)) enclose the RCK C-terminal 1 domain. The RCK N-terminal 2 domain maps to 230-348 (RTRILLIGCG…FEMVGIDMAV (119 aa)). An NAD(+)-binding site is contributed by 232 to 262 (RILLIGCGIVGMYLAKLIDKEENADLRIIEH). Positions 368–448 (QTLTTIEGER…AASEVEKYFK (81 aa)) constitute an RCK C-terminal 2 domain.

Part of a potassium transport system. This is Trk system potassium uptake protein TrkA homolog 1 (trkA1) from Methanosarcina mazei (strain ATCC BAA-159 / DSM 3647 / Goe1 / Go1 / JCM 11833 / OCM 88) (Methanosarcina frisia).